Reading from the N-terminus, the 122-residue chain is Large ribosomal subunit protein uL14 (122 aa).

Belongs to the universal ribosomal protein uL14 family. As to quaternary structure, part of the 50S ribosomal subunit. Forms a cluster with proteins L3 and L19. In the 70S ribosome, L14 and L19 interact and together make contacts with the 16S rRNA in bridges B5 and B8.

In terms of biological role, binds to 23S rRNA. Forms part of two intersubunit bridges in the 70S ribosome. The chain is Large ribosomal subunit protein uL14 from Nocardia farcinica (strain IFM 10152).